Reading from the N-terminus, the 95-residue chain is Large ribosomal subunit protein uL23 (95 aa).

It belongs to the universal ribosomal protein uL23 family. Part of the 50S ribosomal subunit. Contacts protein L29, and trigger factor when it is bound to the ribosome.

In terms of biological role, one of the early assembly proteins it binds 23S rRNA. One of the proteins that surrounds the polypeptide exit tunnel on the outside of the ribosome. Forms the main docking site for trigger factor binding to the ribosome. The protein is Large ribosomal subunit protein uL23 of Desulforamulus reducens (strain ATCC BAA-1160 / DSM 100696 / MI-1) (Desulfotomaculum reducens).